Consider the following 763-residue polypeptide: Phosphoglycerol transferase I (763 aa).

The next 4 helical transmembrane spans lie at 1–21 (MSELLSFALFLASVLIYAWKA), 26–46 (WWFAATLTVLGLFVVLNITLF), 77–97 (ILPGIGIVLGLTAVFGALGWI), and 108–128 (FGYSLLALLLALGSVDASPAF).

Belongs to the OpgB family.

Its subcellular location is the cell inner membrane. The enzyme catalyses a phosphatidylglycerol + a membrane-derived-oligosaccharide D-glucose = a 1,2-diacyl-sn-glycerol + a membrane-derived-oligosaccharide 6-(glycerophospho)-D-glucose.. It participates in glycan metabolism; osmoregulated periplasmic glucan (OPG) biosynthesis. Functionally, transfers a phosphoglycerol residue from phosphatidylglycerol to the membrane-bound nascent glucan backbones. The polypeptide is Phosphoglycerol transferase I (Escherichia coli (strain ATCC 8739 / DSM 1576 / NBRC 3972 / NCIMB 8545 / WDCM 00012 / Crooks)).